Here is a 133-residue protein sequence, read N- to C-terminus: MVTLSDLESNASSSVTKNEVNTSSLVNGNGVLIITENVNKEHSVENQLASSKTEEQTLKISKKSNLNPAQKSSTFGLENTSPVIRPTSVFTKSTVLSTENNLVSFEVDFMNFFSALNFFLESLVYFVVNDFSS.

The interval 44–79 (VENQLASSKTEEQTLKISKKSNLNPAQKSSTFGLEN) is disordered. Over residues 63-79 (KSNLNPAQKSSTFGLEN) the composition is skewed to polar residues.

It is found in the plastid. The protein resides in the chloroplast. This is an uncharacterized protein from Chlorella vulgaris (Green alga).